We begin with the raw amino-acid sequence, 277 residues long: Probable cytochrome c oxidase subunit 3 (277 aa).

Helical transmembrane passes span Pro-20–Met-40, Phe-45–Trp-65, Ile-88–Phe-108, Cys-173–Tyr-193, Phe-211–Val-231, and Ala-255–Phe-275.

It belongs to the cytochrome c oxidase subunit 3 family.

It is found in the cell membrane. The catalysed reaction is 4 Fe(II)-[cytochrome c] + O2 + 8 H(+)(in) = 4 Fe(III)-[cytochrome c] + 2 H2O + 4 H(+)(out). The sequence is that of Probable cytochrome c oxidase subunit 3 (ctaE) from Rickettsia bellii (strain RML369-C).